A 539-amino-acid chain; its full sequence is Transcription factor LG2 (539 aa).

The span at 115-125 shows a compositional bias: polar residues; sequence MRQQQQLHSGN. Disordered regions lie at residues 115–140 and 181–246; these read MRQQ…SAQN and KPGL…KSRL. Low complexity-rich tracts occupy residues 126–137 and 192–205; these read SQSVGSTTDSSS and QQQH…QQQL. A compositionally biased stretch (basic and acidic residues) spans 219–242; that stretch reads TRKDGKSVDAKTERRLAQNREAAR. Residues 227–271 form the bZIP domain; that stretch reads DAKTERRLAQNREAARKSRLRKKAYVQNLETSRVRLQQIEQELQR. The segment at 229-249 is basic motif; it reads KTERRLAQNREAARKSRLRKK. The leucine-zipper stretch occupies residues 255-269; the sequence is LETSRVRLQQIEQEL. The DOG1 domain occupies 292–506; the sequence is AAMFDMEYAR…RALSNLWSSR (215 aa). Positions 513-539 are disordered; sequence GTESVSPTGTELQPMHNQPQQNQYSGF.

It belongs to the bZIP family. In terms of assembly, interacts with NPR1/NH1 and NPR3/NH3.

The protein localises to the nucleus. Functionally, transcriptional regulator involved in defense response. Acts as a transcriptional activator in vitro. This Oryza sativa subsp. japonica (Rice) protein is Transcription factor LG2.